The primary structure comprises 60 residues: Large ribosomal subunit protein bL32 (60 aa).

Positions Met1–Lys21 are disordered. Residues His7–Tyr20 are compositionally biased toward basic residues.

Belongs to the bacterial ribosomal protein bL32 family.

In Streptococcus thermophilus (strain ATCC BAA-250 / LMG 18311), this protein is Large ribosomal subunit protein bL32.